We begin with the raw amino-acid sequence, 209 residues long: Ribosomal RNA large subunit methyltransferase E (209 aa).

5 residues coordinate S-adenosyl-L-methionine: Gly-63, Trp-65, Asp-83, Asp-99, and Asp-124. Lys-164 acts as the Proton acceptor in catalysis.

This sequence belongs to the class I-like SAM-binding methyltransferase superfamily. RNA methyltransferase RlmE family.

Its subcellular location is the cytoplasm. The catalysed reaction is uridine(2552) in 23S rRNA + S-adenosyl-L-methionine = 2'-O-methyluridine(2552) in 23S rRNA + S-adenosyl-L-homocysteine + H(+). Specifically methylates the uridine in position 2552 of 23S rRNA at the 2'-O position of the ribose in the fully assembled 50S ribosomal subunit. This Aeromonas salmonicida (strain A449) protein is Ribosomal RNA large subunit methyltransferase E.